A 357-amino-acid polypeptide reads, in one-letter code: Peptide chain release factor 1 (357 aa).

N5-methylglutamine is present on Gln233.

The protein belongs to the prokaryotic/mitochondrial release factor family. In terms of processing, methylated by PrmC. Methylation increases the termination efficiency of RF1.

It localises to the cytoplasm. Functionally, peptide chain release factor 1 directs the termination of translation in response to the peptide chain termination codons UAG and UAA. This Enterococcus faecalis (strain ATCC 700802 / V583) protein is Peptide chain release factor 1.